Consider the following 137-residue polypeptide: Basic phospholipase A2 2 (137 aa).

The N-terminal stretch at 1–11 is a signal peptide; it reads LVAVCVSLLGA. Residues 12-19 constitute a propeptide that is removed on maturation; that stretch reads ANIPPQPL. 7 disulfide bridges follow: cysteine 30-cysteine 89, cysteine 44-cysteine 136, cysteine 46-cysteine 62, cysteine 61-cysteine 117, cysteine 68-cysteine 110, cysteine 78-cysteine 103, and cysteine 96-cysteine 108. The Ca(2+) site is built by tyrosine 45 and glycine 47. Tyrosine 48 is a binding site for alpha-D-mannopyranose. Glycine 49 lines the Ca(2+) pocket. Histidine 65 is a catalytic residue. Residue aspartate 66 participates in Ca(2+) binding. Aspartate 66 lines the alpha-D-mannopyranose pocket. Aspartate 111 is an active-site residue.

It belongs to the phospholipase A2 family. Group I subfamily. D49 sub-subfamily. In terms of assembly, homodimer; non-covalently linked. The cofactor is Ca(2+). In terms of processing, homodimerization and interaction of the catalytically important Asp-49 (here Asp-111) with mannose molecules may render this protein inactive. Expressed by the venom gland.

It localises to the secreted. It catalyses the reaction a 1,2-diacyl-sn-glycero-3-phosphocholine + H2O = a 1-acyl-sn-glycero-3-phosphocholine + a fatty acid + H(+). In terms of biological role, snake venom phospholipase A2 (PLA2) that shows anticoagulant and neurotoxic activities. Its function is as follows. PLA2 catalyzes the calcium-dependent hydrolysis of the 2-acyl groups in 3-sn-phosphoglycerides. The polypeptide is Basic phospholipase A2 2 (Bungarus caeruleus (Indian krait)).